A 987-amino-acid polypeptide reads, in one-letter code: uncharacterized protein (987 aa).

Transmembrane regions (helical) follow at residues 12 to 32 and 958 to 978; these read FIYL…SVSG and VENN…LGIL.

It to M.jannaschii MJ1393 and A.fulgidus AF2028.

Its subcellular location is the cell membrane. This is an uncharacterized protein from Methanocaldococcus jannaschii (strain ATCC 43067 / DSM 2661 / JAL-1 / JCM 10045 / NBRC 100440) (Methanococcus jannaschii).